A 529-amino-acid chain; its full sequence is Zinc finger protein 572 (529 aa).

Residues 1–125 (MEQEQKLLVS…TGPAGQQNPS (125 aa)) are disordered. A Glycyl lysine isopeptide (Lys-Gly) (interchain with G-Cter in SUMO2) cross-link involves residue Lys-6. A compositionally biased stretch (polar residues) spans 22 to 42 (KNTITGDESKNNLKTVQFSNS). A compositionally biased stretch (basic and acidic residues) spans 43-68 (KADKERASKWSRSDGPENYKDEDTKE). Residues 87–96 (NDSNLGSQRN) show a composition bias toward polar residues. 12 consecutive C2H2-type zinc fingers follow at residues 131 to 153 (YKCS…QRTH), 159 to 181 (YRCS…LRTH), 187 to 209 (YQCG…ERTH), 215 to 237 (YKCP…HRSH), 243 to 265 (YECP…QRTH), 271 to 293 (YKCP…QRTH), 299 to 321 (YKCP…QRIH), 327 to 349 (YQCI…QKMH), 383 to 405 (YKCC…QRTH), 411 to 433 (YRCS…QRTH), 439 to 461 (YKCP…RRTH), and 467 to 489 (YKCT…RKIH).

It belongs to the krueppel C2H2-type zinc-finger protein family.

Its subcellular location is the nucleus. Functionally, may be involved in transcriptional regulation. This is Zinc finger protein 572 (ZNF572) from Bos taurus (Bovine).